Consider the following 143-residue polypeptide: uncharacterized protein (143 aa).

The protein belongs to the OsmC/Ohr family.

This is an uncharacterized protein from Acinetobacter baylyi (strain ATCC 33305 / BD413 / ADP1).